A 457-amino-acid chain; its full sequence is Siroheme synthase (457 aa).

The precorrin-2 dehydrogenase /sirohydrochlorin ferrochelatase stretch occupies residues 1 to 204; the sequence is MDHLPIFCQL…NDQKAITETT (204 aa). Residues 22–23 and 43–44 each bind NAD(+); these read DV and LA. Ser-128 carries the phosphoserine modification. The segment at 216–457 is uroporphyrinogen-III C-methyltransferase; it reads GEVVLVGAGP…RDKLNWFSNH (242 aa). Pro-225 is a binding site for S-adenosyl-L-methionine. The active-site Proton acceptor is Asp-248. Lys-270 (proton donor) is an active-site residue. Residues 301-303, Ile-306, 331-332, Met-382, and Gly-411 contribute to the S-adenosyl-L-methionine site; these read GGD and TA.

The protein in the N-terminal section; belongs to the precorrin-2 dehydrogenase / sirohydrochlorin ferrochelatase family. In the C-terminal section; belongs to the precorrin methyltransferase family.

The enzyme catalyses uroporphyrinogen III + 2 S-adenosyl-L-methionine = precorrin-2 + 2 S-adenosyl-L-homocysteine + H(+). It carries out the reaction precorrin-2 + NAD(+) = sirohydrochlorin + NADH + 2 H(+). It catalyses the reaction siroheme + 2 H(+) = sirohydrochlorin + Fe(2+). It functions in the pathway cofactor biosynthesis; adenosylcobalamin biosynthesis; precorrin-2 from uroporphyrinogen III: step 1/1. Its pathway is cofactor biosynthesis; adenosylcobalamin biosynthesis; sirohydrochlorin from precorrin-2: step 1/1. The protein operates within porphyrin-containing compound metabolism; siroheme biosynthesis; precorrin-2 from uroporphyrinogen III: step 1/1. It participates in porphyrin-containing compound metabolism; siroheme biosynthesis; siroheme from sirohydrochlorin: step 1/1. It functions in the pathway porphyrin-containing compound metabolism; siroheme biosynthesis; sirohydrochlorin from precorrin-2: step 1/1. Multifunctional enzyme that catalyzes the SAM-dependent methylations of uroporphyrinogen III at position C-2 and C-7 to form precorrin-2 via precorrin-1. Then it catalyzes the NAD-dependent ring dehydrogenation of precorrin-2 to yield sirohydrochlorin. Finally, it catalyzes the ferrochelation of sirohydrochlorin to yield siroheme. In Shigella boydii serotype 18 (strain CDC 3083-94 / BS512), this protein is Siroheme synthase.